The sequence spans 132 residues: Profilin (132 aa).

Belongs to the profilin family. As to quaternary structure, occurs in many kinds of cells as a complex with monomeric actin in a 1:1 ratio.

The protein localises to the cytoplasm. The protein resides in the cytoskeleton. In terms of biological role, binds to actin and affects the structure of the cytoskeleton. At high concentrations, profilin prevents the polymerization of actin, whereas it enhances it at low concentrations. By binding to PIP2, it inhibits the formation of IP3 and DG. The chain is Profilin from Naegleria pringsheimi (Amoeba).